The primary structure comprises 229 residues: MLCCCVNSENNKKYAELDAKLARKMVESRSIYPGHRSLKSMDSIIMKFPKLREGLRNIRSVFESYDNDTNGTIDIEELKKCLEELKLSLSDEEVKGLYSWCDVDGSKGIQFNEFIVLLCLIYLLAKPSSESSTESREMGPKLVESIFDPIVEVFLFLDKDGKGKLNKADVIKTLNNEDYPLERSPSHVTNMRFEEMDWGRKGKVGFREFLFAFMSWVGLDDADDDFMSS.

EF-hand domains follow at residues 53 to 88 (EGLRNIRSVFESYDNDTNGTIDIEELKKCLEELKLS), 89 to 124 (LSDEEVKGLYSWCDVDGSKGIQFNEFIVLLCLIYLL), 145 to 180 (SIFDPIVEVFLFLDKDGKGKLNKADVIKTLNNEDYP), and 184 to 219 (SPSHVTNMRFEEMDWGRKGKVGFREFLFAFMSWVGL). 5 residues coordinate Ca(2+): aspartate 66, aspartate 68, asparagine 70, threonine 72, and glutamate 77.

Its function is as follows. Potential calcium sensor. The protein is Probable calcium-binding protein CML22 (CML22) of Arabidopsis thaliana (Mouse-ear cress).